We begin with the raw amino-acid sequence, 782 residues long: Endonuclease MutS2 (782 aa).

336–343 (GPNTGGKT) is a binding site for ATP. Residues 707 to 782 (LDLRGYRYEE…GFGVTVAELK (76 aa)) form the Smr domain.

Belongs to the DNA mismatch repair MutS family. MutS2 subfamily. As to quaternary structure, homodimer. Binds to stalled ribosomes, contacting rRNA.

Its function is as follows. Endonuclease that is involved in the suppression of homologous recombination and thus may have a key role in the control of bacterial genetic diversity. Acts as a ribosome collision sensor, splitting the ribosome into its 2 subunits. Detects stalled/collided 70S ribosomes which it binds and splits by an ATP-hydrolysis driven conformational change. Acts upstream of the ribosome quality control system (RQC), a ribosome-associated complex that mediates the extraction of incompletely synthesized nascent chains from stalled ribosomes and their subsequent degradation. Probably generates substrates for RQC. The polypeptide is Endonuclease MutS2 (Staphylococcus epidermidis (strain ATCC 35984 / DSM 28319 / BCRC 17069 / CCUG 31568 / BM 3577 / RP62A)).